The chain runs to 273 residues: Light-independent protochlorophyllide reductase iron-sulfur ATP-binding protein (273 aa).

ATP is bound by residues 12-17 (GIGKST) and Lys-41. Residue Ser-16 coordinates Mg(2+). Residues Cys-97 and Cys-131 each contribute to the [4Fe-4S] cluster site. Residue 182-183 (NR) participates in ATP binding.

The protein belongs to the NifH/BchL/ChlL family. Homodimer. Protochlorophyllide reductase is composed of three subunits; BchL, BchN and BchB. The cofactor is [4Fe-4S] cluster.

It carries out the reaction chlorophyllide a + oxidized 2[4Fe-4S]-[ferredoxin] + 2 ADP + 2 phosphate = protochlorophyllide a + reduced 2[4Fe-4S]-[ferredoxin] + 2 ATP + 2 H2O. It functions in the pathway porphyrin-containing compound metabolism; bacteriochlorophyll biosynthesis (light-independent). Component of the dark-operative protochlorophyllide reductase (DPOR) that uses Mg-ATP and reduced ferredoxin to reduce ring D of protochlorophyllide (Pchlide) to form chlorophyllide a (Chlide). This reaction is light-independent. The L component serves as a unique electron donor to the NB-component of the complex, and binds Mg-ATP. The polypeptide is Light-independent protochlorophyllide reductase iron-sulfur ATP-binding protein (Chloroflexus aggregans (strain MD-66 / DSM 9485)).